The chain runs to 516 residues: L-amino acid oxidase Lm29 (516 aa).

The first 18 residues, 1–18 (MNVFFMFSLLFLAALGSC), serve as a signal peptide directing secretion. C28 and C191 are disulfide-bonded. Residues 61–62 (MS), 81–82 (EA), R89, and 105–108 (GPMR) each bind FAD. Position 108 (R108) interacts with substrate. An N-linked (GlcNAc...) asparagine glycan is attached at N190. H241 is a substrate binding site. V279 lines the FAD pocket. A disulfide bond links C349 and C430. The N-linked (GlcNAc...) asparagine glycan is linked to N379. Y390 serves as a coordination point for substrate. FAD-binding positions include E475 and 482–487 (GWIDST). Residue 482 to 483 (GW) coordinates substrate.

It belongs to the flavin monoamine oxidase family. FIG1 subfamily. Homodimer; non-covalently linked. It depends on FAD as a cofactor. In terms of tissue distribution, expressed by the venom gland.

Its subcellular location is the secreted. The catalysed reaction is an L-alpha-amino acid + O2 + H2O = a 2-oxocarboxylate + H2O2 + NH4(+). It carries out the reaction L-leucine + O2 + H2O = 4-methyl-2-oxopentanoate + H2O2 + NH4(+). It catalyses the reaction L-phenylalanine + O2 + H2O = 3-phenylpyruvate + H2O2 + NH4(+). The enzyme catalyses L-tryptophan + O2 + H2O = indole-3-pyruvate + H2O2 + NH4(+). The catalysed reaction is L-methionine + O2 + H2O = 4-methylsulfanyl-2-oxobutanoate + H2O2 + NH4(+). It carries out the reaction L-isoleucine + O2 + H2O = (S)-3-methyl-2-oxopentanoate + H2O2 + NH4(+). It catalyses the reaction L-tyrosine + O2 + H2O = 3-(4-hydroxyphenyl)pyruvate + H2O2 + NH4(+). In terms of biological role, catalyzes an oxidative deamination of predominantly hydrophobic and aromatic L-amino acids, thus producing hydrogen peroxide that may contribute to the diverse toxic effects of this enzyme. Is highly active on L-Met=L-Leu&gt;&gt;L-Phe&gt;L-Trp&gt;L-Tyr&gt;L-Ile, and weakly or not active on L-His, L-Arg, L-Val, L-Gln, L-Thr, L-Lys, and L-Ser. Exhibits a low myotoxicity (a mild myonecrosis is observed after injection in mice quadriceps muscle). In vitro, is cytotoxic to a lot of human cell lines, including AGS (IC(50)=22.7 ug/ml), MCF-7 (IC(50)=1.4 ug/ml), HL-60, HeLa and Jurkat cells, as well as to the parasite Leishmania brasiliensis (IC(50)=2.22 ug/ml). This cytotoxicity is dependent on the production of hydrogen peroxyde, since it is inhibited by catalase, a hydrogen peroxyde scavenger. The protein is L-amino acid oxidase Lm29 of Lachesis muta (South American bushmaster).